Reading from the N-terminus, the 500-residue chain is Endothelial lipase (500 aa).

Residues 1–20 (MRNTVFLLGFWSVYCYFPAG) form the signal peptide. C64 and C77 are oxidised to a cystine. N-linked (GlcNAc...) asparagine glycosylation is found at N65, N80, and N136. The Nucleophile role is filled by S169. D193 functions as the Charge relay system in the catalytic mechanism. Residues C252 and C272 are joined by a disulfide bond. H274 serves as the catalytic Charge relay system. Disulfide bonds link C297–C316 and C308–C311. 325–337 (KMRKKRNSKMYLK) is a heparin binding site. Residues 347-482 (YHYQLKVHMF…SPGQELWFHK (136 aa)) form the PLAT domain. N-linked (GlcNAc...) asparagine glycosylation is found at N359 and N393. A disulfide bridge links C463 with C483. A glycan (N-linked (GlcNAc...) asparagine) is linked at N491.

It belongs to the AB hydrolase superfamily. Lipase family. In terms of assembly, head to tail homodimer. As to expression, expressed in placenta, lung, liver, testis and spleen.

It is found in the secreted. The enzyme catalyses a triacylglycerol + H2O = a diacylglycerol + a fatty acid + H(+). The catalysed reaction is a 1,2-diacyl-sn-glycero-3-phosphocholine + H2O = a 2-acyl-sn-glycero-3-phosphocholine + a fatty acid + H(+). It catalyses the reaction 1,2,3-tri-(9Z-octadecenoyl)-glycerol + H2O = di-(9Z)-octadecenoylglycerol + (9Z)-octadecenoate + H(+). It carries out the reaction 1,2,3-tributanoylglycerol + H2O = dibutanoylglycerol + butanoate + H(+). The enzyme catalyses 1,2-dihexadecanoyl-sn-glycero-3-phosphocholine + H2O = hexadecanoyl-sn-glycero-3-phosphocholine + hexadecanoate + H(+). Exerts both phospholipase and triglyceride lipase activities. More active as a phospholipase than a triglyceride lipase. Hydrolyzes triglycerides, both with short-chain fatty acyl groups (tributyrin) and long-chain fatty acyl groups (triolein) with similar levels of activity toward both types of substrates. Hydrolyzes high density lipoproteins (HDL) more efficiently than other lipoproteins. The chain is Endothelial lipase (Lipg) from Mus musculus (Mouse).